Reading from the N-terminus, the 473-residue chain is Ribulose bisphosphate carboxylase large chain (473 aa).

Residues Asn-116 and Thr-166 each contribute to the substrate site. Residue Lys-168 is the Proton acceptor of the active site. Residue Lys-170 participates in substrate binding. Residues Lys-194, Asp-196, and Glu-197 each coordinate Mg(2+). Lys-194 is modified (N6-carboxylysine). His-287 (proton acceptor) is an active-site residue. Positions 288, 320, and 372 each coordinate substrate.

This sequence belongs to the RuBisCO large chain family. Type I subfamily. As to quaternary structure, heterohexadecamer of 8 large chains and 8 small chains. Mg(2+) is required as a cofactor.

It catalyses the reaction 2 (2R)-3-phosphoglycerate + 2 H(+) = D-ribulose 1,5-bisphosphate + CO2 + H2O. The enzyme catalyses D-ribulose 1,5-bisphosphate + O2 = 2-phosphoglycolate + (2R)-3-phosphoglycerate + 2 H(+). Functionally, ruBisCO catalyzes two reactions: the carboxylation of D-ribulose 1,5-bisphosphate, the primary event in carbon dioxide fixation, as well as the oxidative fragmentation of the pentose substrate. Both reactions occur simultaneously and in competition at the same active site. The chain is Ribulose bisphosphate carboxylase large chain from Halorhodospira halophila (strain DSM 244 / SL1) (Ectothiorhodospira halophila (strain DSM 244 / SL1)).